Reading from the N-terminus, the 285-residue chain is Sulfotransferase 2A1 (285 aa).

Residues Lys44, Ser45, Gly46, Thr47, Asn48, and Trp49 each contribute to the 3'-phosphoadenylyl sulfate site. The active-site Proton acceptor is His99. Arg121, Ser129, Tyr184, Ser218, Met223, Arg247, Lys248, and Gly249 together coordinate 3'-phosphoadenylyl sulfate. Position 251 is a phosphoserine (Ser251).

Belongs to the sulfotransferase 1 family. Homodimer. Predominanly expressed in liver. Detected also in adrenal gland and in jejunum.

It localises to the cytoplasm. It is found in the cytosol. The catalysed reaction is an alcohol + 3'-phosphoadenylyl sulfate = an alkyl sulfate + adenosine 3',5'-bisphosphate + H(+). It carries out the reaction 3beta-hydroxyandrost-5-en-17-one + 3'-phosphoadenylyl sulfate = dehydroepiandrosterone 3-sulfate + adenosine 3',5'-bisphosphate + H(+). It catalyses the reaction taurolithocholate + 3'-phosphoadenylyl sulfate = taurolithocholate 3-sulfate + adenosine 3',5'-bisphosphate + H(+). The enzyme catalyses lithocholate + 3'-phosphoadenylyl sulfate = lithocholate sulfate + adenosine 3',5'-bisphosphate + H(+). The catalysed reaction is (24S)-hydroxycholesterol + 3'-phosphoadenylyl sulfate = (24S)-hydroxycholesterol 24-sulfate + adenosine 3',5'-bisphosphate + H(+). It carries out the reaction (24S)-hydroxycholesterol + 3'-phosphoadenylyl sulfate = (24S)-hydroxycholesterol 3-sulfate + adenosine 3',5'-bisphosphate + H(+). It catalyses the reaction (24S)-hydroxycholesterol 24-sulfate + 3'-phosphoadenylyl sulfate = (24S)-hydroxycholesterol 3,24-disulfate + adenosine 3',5'-bisphosphate + H(+). The enzyme catalyses pregnenolone + 3'-phosphoadenylyl sulfate = pregnenolone sulfate + adenosine 3',5'-bisphosphate + H(+). The catalysed reaction is androsterone + 3'-phosphoadenylyl sulfate = androsterone 3alpha-sulfate + adenosine 3',5'-bisphosphate + H(+). Its function is as follows. Sulfotransferase that utilizes 3'-phospho-5'-adenylyl sulfate (PAPS) as sulfonate donor to catalyze the sulfonation of steroids and bile acids in the liver and adrenal glands. Mediates the sulfation of a wide range of steroids and sterols, including pregnenolone, androsterone, DHEA, bile acids, cholesterol and as well many xenobiotics that contain alcohol and phenol functional groups. Sulfonation increases the water solubility of most compounds, and therefore their renal excretion, but it can also result in bioactivation to form active metabolites. Plays an important role in maintening steroid and lipid homeostasis. Plays a key role in bile acid metabolism. In addition, catalyzes the metabolic activation of potent carcinogenic polycyclic arylmethanols. This chain is Sulfotransferase 2A1 (SULT2A1), found in Macaca fascicularis (Crab-eating macaque).